Reading from the N-terminus, the 2100-residue chain is MPFSLPSFAQKLVLRYALSRLGLVDTDTLDLATLGITWGQRSTFELRNVGLKLEKLSAHLPPYCTLTKGSVSLLRVTVPANLHNSSIIVEVDGVDARVRLLPDKPEQNAPPTRSKGTAEDEGQDGHSVLPSTADLAQSFLESEPKEETEELQAAILSQSQYPEHLDAQSDDGEEDLGLYDGLSLPAFIAGFLKGVIDRLQLNIANVSLRVDTEVQRDGVLKDETQDPISGLFTIQEIAIDSTATSASEDSRLKIGKRMVSLSGIHAMIMSDAEVFSNYSRFNAPDIPSTVHSKSTHTPLRPRSPQPSSSGSDSCGDMSRSTILDPSSMYGSRLTVDSHGDESRHLESSVYSTTGRFSDADSDDENDLEFYSQATTGMLDSHYDERLLDNPAYLDEALKSQFDDHLEDSTIFPKDCPSTPVRDQTPRPHVSKSPSSSPEHYMYHSVHESNFPVGGGIRDNEPDSATSARGKTPDCQTEQESPSTSKICPAVSQPEDLSASRIFTHEEAQSMYMSAMSQSSTTSFDPDMPGAWGSSKRIDTSDPDQKEQPLSGDTDTEAKGASHDFDTSQNSPEAQTGEDDERESVHNSPQYISGVVKEILAIDRIIIWLPSVDSQDSEEIPKTDIDSKPVDPMVESTITLADSVTPDLLANTRSRLAQSAFRRGSVSSIVSSRHLPISRTKPTTQKHEDFDGLNDPQTTRAVEIDITSLTAKLDIASGWLLVKIGQRITDVSTSTSKQTKISEAASEESSPSFFRLNLTSCSLKFLERVPAQPYPLSSAPSLSQLQSGIPIEETILHLTLSGTSIDFAAIGNTTKLRLDVMKFVLGHMSYDIISFDESLRMRESTRDVTSPGQKDISLRVIKSSESTTVNLTTLPICLSLDLQELDETLGWFGGLSTVLELGSSIASASTVKGEQPCSPPRPRRGVHFADPVPPSSPSTTNHAALKANCRIGGIVLRVIGEHCTVQLGTTAAKLVSRFEGIALQIDKASVGGPHLRKEPSPSPPSLDFENIRFEYLYGPKEVDLDRLLGLLTPSKDKFDEDDDIMLDTLFRQRRQGAVLRLTVGHADFAVPNPTALQPLSHLGEELAKLATVAKYLPQDDRPGILILALVREFEGRVHVNNEAGDITIISHNLEAGYVTFPSLLATRISTVTVVRNGSEELVAEVIPEDTEEARTHDPLPMIMARFIADEMEPTVKIKLYNVRVEYTVPSITAFLGLNNQMAAEDVAANMAQSVLNLADLKAHHEPGSDLSERDSIGSGDDRSAMLPRLSVGMKDCGIGLNPRKSPAKALVIFTRASFSGALHETKPSEALLDIRKASVMIIDNVENLGSAENYRHRMSSGARSGQIQHLQSIGFVPVCDISSASVALKVMQLDVEGEKSLDIEVRDDLLVLETCADSTQTLISILSGLAPLSPPITERKYRTEVIRIEDMLNSLSGDAFATDIVPDSDYEVEGENDGQDGDGAEEIEYVSVFYPSHGDSGPQGRGATTPRFGNEGSASAGTSRILGSFHSEAQMSSSIPELEFQEDHFAKQSAVGDTAHRWDSSRNTYTLATEVKLRDSPLRIRVRDVHVIWNLYDGYDWQRTRDTISKAVRDVQAKAAEKFARRPGNRLSADFEEDEESVIGDFLFNSVYIGIPANRDPRELSHDINRNIDDLASETMSFATSTTVTGLQNQVPGTKREKLRLARSKHHKMTFELKGISADLIVFPPHSGETQSSLDIRVEDLEIFDHIPTSTWKKFATYMRDVGEREIGTSMVHLEILNVKPVPDLAASEVVLKATVLPLRLHVDQDALDFLSRFFEFKDDSAPSEPSPEDVPFLQRAEVNAIRVRLDFKPKRVDYAGLRSGRTTEFMNFFVLDEADMVLQHVIIYGVSGFDRLGRTLNDIWMPDIKANQLPTVLAGIAPVRSLVNIGGGVKDLVLVPMREYKKDGRIVRSIQKGAVQFAKTTTNELLRFGAKLAIGTQTALQSAEDFLNSPRGSPSRPSTSDGRWDDNGVDEGERPRISLYADQPLGVAQGLRGAYSSLERDILMTRDAIVAMPSEVLESGSATEAARRLLGRTPTVVLRPAIGASKAVSQTLLGVSNALDPKNRRKIDDKYKKHKV.

Disordered regions lie at residues 101-129 (LPDKPEQNAPPTRSKGTAEDEGQDGHSVL), 288-363 (STVH…DSDD), 410-492 (IFPK…AVSQ), 512-588 (MSAM…HNSP), 674-694 (LPISRTKPTTQKHEDFDGLND), 1474-1499 (PSHGDSGPQGRGATTPRFGNEGSASA), and 1969-1996 (DFLNSPRGSPSRPSTSDGRWDDNGVDEG). Residues 300–320 (RPRSPQPSSSGSDSCGDMSRS) show a composition bias toward low complexity. The span at 335–346 (VDSHGDESRHLE) shows a compositional bias: basic and acidic residues. Positions 462-485 (DSATSARGKTPDCQTEQESPSTSK) are enriched in polar residues. The segment covering 512–522 (MSAMSQSSTTS) has biased composition (low complexity). Basic and acidic residues-rich tracts occupy residues 535 to 546 (KRIDTSDPDQKE) and 555 to 565 (TEAKGASHDFD). Over residues 1973-1985 (SPRGSPSRPSTSD) the composition is skewed to low complexity. Residues 1986 to 1996 (GRWDDNGVDEG) are compositionally biased toward basic and acidic residues.

Belongs to the ATG2 family.

The protein localises to the preautophagosomal structure membrane. It localises to the endoplasmic reticulum membrane. The enzyme catalyses a 1,2-diacyl-sn-glycero-3-phosphocholine(in) = a 1,2-diacyl-sn-glycero-3-phosphocholine(out). It catalyses the reaction a 1,2-diacyl-sn-glycero-3-phospho-L-serine(in) = a 1,2-diacyl-sn-glycero-3-phospho-L-serine(out). The catalysed reaction is a 1,2-diacyl-sn-glycero-3-phosphoethanolamine(in) = a 1,2-diacyl-sn-glycero-3-phosphoethanolamine(out). Lipid transfer protein required for autophagosome completion and peroxisome degradation. Tethers the edge of the isolation membrane (IM) to the endoplasmic reticulum (ER) and mediates direct lipid transfer from ER to IM for IM expansion. ATG2 binds to the ER exit site (ERES), which is the membrane source for autophagosome formation, using basic residues in its N-terminal region (NR) and to the expanding edge of the IM through its C-terminal region. The latter binding is assisted by an ATG18-PtdIns3P interaction. ATG2 then extracts phospholipids from the membrane source using its NR and transfers them to ATG9 to the IM through its predicted beta-sheet-rich structure for membrane expansion. The chain is Autophagy-related protein 2 (ATG2) from Coccidioides immitis (strain RS) (Valley fever fungus).